Reading from the N-terminus, the 491-residue chain is Acetyl-coenzyme A carboxylase carboxyl transferase subunit beta, chloroplastic (491 aa).

One can recognise a CoA carboxyltransferase N-terminal domain in the interval 229 to 491; the sequence is LWVQCENCYG…FQLHGFFPLT (263 aa). 4 residues coordinate Zn(2+): C233, C236, C252, and C255. A C4-type zinc finger spans residues 233–255; the sequence is CENCYGLNYKQFFRSRLNICEHC.

Belongs to the AccD/PCCB family. As to quaternary structure, acetyl-CoA carboxylase is a heterohexamer composed of biotin carboxyl carrier protein, biotin carboxylase and 2 subunits each of ACCase subunit alpha and ACCase plastid-coded subunit beta (accD). It depends on Zn(2+) as a cofactor.

The protein localises to the plastid. Its subcellular location is the chloroplast stroma. The catalysed reaction is N(6)-carboxybiotinyl-L-lysyl-[protein] + acetyl-CoA = N(6)-biotinyl-L-lysyl-[protein] + malonyl-CoA. The protein operates within lipid metabolism; malonyl-CoA biosynthesis; malonyl-CoA from acetyl-CoA: step 1/1. Component of the acetyl coenzyme A carboxylase (ACC) complex. Biotin carboxylase (BC) catalyzes the carboxylation of biotin on its carrier protein (BCCP) and then the CO(2) group is transferred by the transcarboxylase to acetyl-CoA to form malonyl-CoA. This Lemna minor (Common duckweed) protein is Acetyl-coenzyme A carboxylase carboxyl transferase subunit beta, chloroplastic.